The primary structure comprises 245 residues: Complement C1q subcomponent subunit C (245 aa).

The signal sequence occupies residues 1-28 (MVVGTSCQPQHGLYLLLLLLALPLRSQA). Positions 31 to 112 (GCYGIPGMPG…GPPGEPGEEG (82 aa)) constitute a Collagen-like domain. Residues P36, P39, P42, P45, and P63 each carry the 4-hydroxyproline modification. A disordered region spans residues 42-119 (PGTPGKDGHD…EEGRYKQKHQ (78 aa)). The residue at position 75 (K75) is a 5-hydroxylysine. K75 carries O-linked (Gal...) hydroxylysine glycosylation. P81, P96, P99, and P105 each carry 4-hydroxyproline. A compositionally biased stretch (pro residues) spans 98–107 (DPGPRGPPGE). Residues 115-245 (KQKHQSVFTV…VFSGFLLFPD (131 aa)) form the C1q domain. C179 and C193 are oxidised to a cystine.

As to quaternary structure, core component of the complement C1 complex, a calcium-dependent complex composed of 1 molecule of the C1Q subcomplex, 2 molecules of C1R and 2 molecules of C1S. The C1Q subcomplex is composed 18 subunits: 3 chains of C1QA, C1QB, and C1QC trimerize to form 6 collagen-like triple helices connected to six globular ligand-recognition modules (C1q domain). Post-translationally, O-linked glycans consist of Glc-Gal disaccharides bound to the oxygen atom of post-translationally added hydroxyl groups.

The protein resides in the secreted. Its subcellular location is the cell surface. With respect to regulation, the C1Q subcomplex is inhibited by sulfated molecules, such as triterpenoid sulfates, heparan sulfate, or chondroitin sulfates. Functionally, core component of the complement C1 complex, a multiprotein complex that initiates the classical pathway of the complement system, a cascade of proteins that leads to phagocytosis and breakdown of pathogens and signaling that strengthens the adaptive immune system. The classical complement pathway is initiated by the C1Q subcomplex of the C1 complex, which specifically binds IgG or IgM immunoglobulins complexed with antigens, forming antigen-antibody complexes on the surface of pathogens: C1QA, together with C1QB and C1QC, specifically recognizes and binds the Fc regions of IgG or IgM via its C1q domain. Immunoglobulin-binding activates the proenzyme C1R, which cleaves C1S, initiating the proteolytic cascade of the complement system. The C1Q subcomplex is activated by a hexamer of IgG complexed with antigens, while it is activated by a pentameric IgM. The C1Q subcomplex also recognizes and binds phosphatidylserine exposed on the surface of cells undergoing programmed cell death, possibly promoting activation of the complement system. The chain is Complement C1q subcomponent subunit C from Rattus norvegicus (Rat).